Consider the following 173-residue polypeptide: MAIILGIDPGSRITGYGVIQCNGRSQIYLGSGCIRTASDDFPYRLKQIFDGVSEIIRQYQPNFFAIERVFLAKNADSALKLGQARGAAIVAATNADLPVAEYSATQIKSAVVGTGKAEKTQVQHMVQQILKLPAAPQADAADALGVAICHFHTSQSLVSLGGRANTRTYGRYR.

Residues D8, E67, and D139 contribute to the active site. 3 residues coordinate Mg(2+): D8, E67, and D139.

The protein belongs to the RuvC family. Homodimer which binds Holliday junction (HJ) DNA. The HJ becomes 2-fold symmetrical on binding to RuvC with unstacked arms; it has a different conformation from HJ DNA in complex with RuvA. In the full resolvosome a probable DNA-RuvA(4)-RuvB(12)-RuvC(2) complex forms which resolves the HJ. It depends on Mg(2+) as a cofactor.

Its subcellular location is the cytoplasm. It carries out the reaction Endonucleolytic cleavage at a junction such as a reciprocal single-stranded crossover between two homologous DNA duplexes (Holliday junction).. Its function is as follows. The RuvA-RuvB-RuvC complex processes Holliday junction (HJ) DNA during genetic recombination and DNA repair. Endonuclease that resolves HJ intermediates. Cleaves cruciform DNA by making single-stranded nicks across the HJ at symmetrical positions within the homologous arms, yielding a 5'-phosphate and a 3'-hydroxyl group; requires a central core of homology in the junction. The consensus cleavage sequence is 5'-(A/T)TT(C/G)-3'. Cleavage occurs on the 3'-side of the TT dinucleotide at the point of strand exchange. HJ branch migration catalyzed by RuvA-RuvB allows RuvC to scan DNA until it finds its consensus sequence, where it cleaves and resolves the cruciform DNA. This chain is Crossover junction endodeoxyribonuclease RuvC, found in Shewanella woodyi (strain ATCC 51908 / MS32).